The sequence spans 521 residues: Envelope glycoprotein (521 aa).

Positions Met1–Gln20 are cleaved as a signal peptide. Asn44, Asn158, Asn189, and Asn396 each carry an N-linked (GlcNAc...) asparagine; by host glycan. A helical membrane pass occupies residues Ile501–Met517.

As to quaternary structure, homooligomer; disulfide-linked (possibly homodimer).

It localises to the virion membrane. Its function is as follows. Attaches the virus to host cellular receptor and later induces fusion of virion with host membrane. The protein is Envelope glycoprotein (P4) of Dhori virus (strain Indian/1313/61) (Dho).